An 822-amino-acid polypeptide reads, in one-letter code: Probable alpha,alpha-trehalose-phosphate synthase [UDP-forming] 2 (822 aa).

Positions 12–479 are glycosyltransferase; it reads PRLLVVANRL…GLDFMSELNG (468 aa).

This sequence in the N-terminal section; belongs to the glycosyltransferase 20 family. The protein in the C-terminal section; belongs to the trehalose phosphatase family.

It carries out the reaction D-glucose 6-phosphate + UDP-alpha-D-glucose = alpha,alpha-trehalose 6-phosphate + UDP + H(+). In Arabidopsis thaliana (Mouse-ear cress), this protein is Probable alpha,alpha-trehalose-phosphate synthase [UDP-forming] 2 (TPS2).